The primary structure comprises 143 residues: 16 kDa calcium-binding protein (143 aa).

EF-hand domains follow at residues 2–37 (SEEKQWTEVFHAIDKDKNGFLTREEIAQCLKEVGVC), 41–71 (ADKIIKETDMNSDGKISLEEYLNALRKLPPR), 73–108 (KCVARWREVFQSIDKDGSGKVSIKELDEFLKTSGMD), and 109–143 (IDQNSLRNWMTQNDKNKDGELDYDEFLAYVRQTYK). Asp-15, Asp-17, Asn-19, Glu-26, Asp-49, Asn-51, Asp-53, Lys-55, Glu-60, Asp-86, Asp-88, Ser-90, Lys-92, Glu-97, Asp-122, Asn-124, Asp-126, Glu-128, and Glu-133 together coordinate Ca(2+).

Found in eggs.

Calcium-binding protein. The sequence is that of 16 kDa calcium-binding protein from Schistosoma mansoni (Blood fluke).